The primary structure comprises 347 residues: 3-isopropylmalate dehydrogenase (347 aa).

4 residues coordinate substrate: arginine 94, arginine 104, arginine 128, and aspartate 219. Mg(2+) contacts are provided by aspartate 219, aspartate 243, and aspartate 247. 279–291 contributes to the NAD(+) binding site; the sequence is GSAPDIAGQGKAD.

Belongs to the isocitrate and isopropylmalate dehydrogenases family. LeuB type 2 subfamily. In terms of assembly, homodimer. Mg(2+) is required as a cofactor. Requires Mn(2+) as cofactor.

The protein localises to the cytoplasm. The enzyme catalyses (2R,3S)-3-isopropylmalate + NAD(+) = 4-methyl-2-oxopentanoate + CO2 + NADH. It participates in amino-acid biosynthesis; L-leucine biosynthesis; L-leucine from 3-methyl-2-oxobutanoate: step 3/4. Its function is as follows. Catalyzes the oxidation of 3-carboxy-2-hydroxy-4-methylpentanoate (3-isopropylmalate) to 3-carboxy-4-methyl-2-oxopentanoate. The product decarboxylates to 4-methyl-2 oxopentanoate. This chain is 3-isopropylmalate dehydrogenase, found in Streptomyces avermitilis (strain ATCC 31267 / DSM 46492 / JCM 5070 / NBRC 14893 / NCIMB 12804 / NRRL 8165 / MA-4680).